A 469-amino-acid polypeptide reads, in one-letter code: Neuraminidase (469 aa).

Residues 1–6 lie on the Intravirion side of the membrane; it reads MNPNQK. Residues 7–27 form a helical membrane-spanning segment; the sequence is IITIGSICMIVGIISLILQIG. The tract at residues 11–33 is involved in apical transport and lipid raft association; sequence GSICMIVGIISLILQIGNIISIW. The Virion surface segment spans residues 28–469; the sequence is NIISIWVSHS…GAELPFTIDK (442 aa). The interval 36–90 is hypervariable stalk region; it reads HSIQTGNQNQPEICNQSIITYENNTWVNQTYVNISNTNFVTEQALAPVALAGNSS. N-linked (GlcNAc...) asparagine; by host glycosylation is found at Asn-50, Asn-58, Asn-63, Asn-68, and Asn-88. The interval 91–469 is head of neuraminidase; that stretch reads LCPISGWAIY…GAELPFTIDK (379 aa). Cystine bridges form between Cys-92/Cys-417, Cys-124/Cys-129, Cys-184/Cys-231, Cys-233/Cys-238, Cys-279/Cys-292, Cys-281/Cys-290, Cys-318/Cys-335, and Cys-421/Cys-446. Residue Arg-118 participates in substrate binding. Asn-146 is a glycosylation site (N-linked (GlcNAc...) asparagine; by host). The Proton donor/acceptor role is filled by Asp-151. Residue Arg-152 participates in substrate binding. The N-linked (GlcNAc...) asparagine; by host glycan is linked to Asn-235. 277 to 278 provides a ligand contact to substrate; it reads EE. Substrate is bound at residue Arg-293. Residues Asp-294, Gly-298, and Asp-324 each coordinate Ca(2+). Position 368 (Arg-368) interacts with substrate. The Nucleophile role is filled by Tyr-402.

Belongs to the glycosyl hydrolase 34 family. Homotetramer. The cofactor is Ca(2+). N-glycosylated.

It localises to the virion membrane. It is found in the host apical cell membrane. It catalyses the reaction Hydrolysis of alpha-(2-&gt;3)-, alpha-(2-&gt;6)-, alpha-(2-&gt;8)- glycosidic linkages of terminal sialic acid residues in oligosaccharides, glycoproteins, glycolipids, colominic acid and synthetic substrates.. Inhibited by the neuraminidase inhibitors zanamivir (Relenza) and oseltamivir (Tamiflu). These drugs interfere with the release of progeny virus from infected cells and are effective against all influenza strains. Resistance to neuraminidase inhibitors is quite rare. In terms of biological role, catalyzes the removal of terminal sialic acid residues from viral and cellular glycoconjugates. Cleaves off the terminal sialic acids on the glycosylated HA during virus budding to facilitate virus release. Additionally helps virus spread through the circulation by further removing sialic acids from the cell surface. These cleavages prevent self-aggregation and ensure the efficient spread of the progeny virus from cell to cell. Otherwise, infection would be limited to one round of replication. Described as a receptor-destroying enzyme because it cleaves a terminal sialic acid from the cellular receptors. May facilitate viral invasion of the upper airways by cleaving the sialic acid moieties on the mucin of the airway epithelial cells. Likely to plays a role in the budding process through its association with lipid rafts during intracellular transport. May additionally display a raft-association independent effect on budding. Plays a role in the determination of host range restriction on replication and virulence. Sialidase activity in late endosome/lysosome traffic seems to enhance virus replication. This Influenza A virus (strain A/Chicken/Scotland/1959 H5N1) protein is Neuraminidase.